A 41-amino-acid chain; its full sequence is MKVLSSLKSAKTRHRDCKVIRRRGKIFVICKSNPRFKARQR.

The protein belongs to the bacterial ribosomal protein bL36 family.

The chain is Large ribosomal subunit protein bL36 from Xylella fastidiosa (strain 9a5c).